A 280-amino-acid chain; its full sequence is Protein HEAT-INDUCED TAS1 TARGET 4 (280 aa).

This sequence belongs to the heat induced plant HTT protein family. Expressed in seedlings, leaves, stems, inflorescences and siliques.

The protein resides in the cytoplasm. Its subcellular location is the nucleus. Functionally, mediates both basal and acquired thermotolerance. The sequence is that of Protein HEAT-INDUCED TAS1 TARGET 4 from Arabidopsis thaliana (Mouse-ear cress).